The sequence spans 126 residues: Fluoride-specific ion channel FluC 2 (126 aa).

4 consecutive transmembrane segments (helical) span residues 5–25, 44–64, 68–88, and 99–119; these read TALT…GSVL, GTLT…GLAL, AALL…TWML, and MVSA…AALL. The Na(+) site is built by glycine 78 and threonine 81.

The protein belongs to the fluoride channel Fluc/FEX (TC 1.A.43) family.

The protein localises to the cell membrane. It carries out the reaction fluoride(in) = fluoride(out). Na(+) is not transported, but it plays an essential structural role and its presence is essential for fluoride channel function. Fluoride-specific ion channel. Important for reducing fluoride concentration in the cell, thus reducing its toxicity. The protein is Fluoride-specific ion channel FluC 2 of Mycobacterium bovis (strain ATCC BAA-935 / AF2122/97).